Consider the following 631-residue polypeptide: 2-isopropylmalate synthase 2, chloroplastic (631 aa).

Residues 1 to 46 constitute a chloroplast transit peptide; it reads MESSILKSPNLSSPSFGVPSIPALSSSSTSPFSSLHLRSQNHRTIS. One can recognise a Pyruvate carboxyltransferase domain in the interval 87 to 360; it reads VRIFDTTLRD…FTGIDTRHIV (274 aa). Residues Asp-96, His-293, and Asn-329 each contribute to the a divalent metal cation site.

Belongs to the alpha-IPM synthase/homocitrate synthase family. LeuA type 1 subfamily. Homotetramer. Mg(2+) is required as a cofactor. Mn(2+) serves as cofactor. Expressed in roots, stems, leaves, flowers and siliques.

The protein localises to the plastid. It localises to the chloroplast. It carries out the reaction 3-methyl-2-oxobutanoate + acetyl-CoA + H2O = (2S)-2-isopropylmalate + CoA + H(+). Its pathway is amino-acid biosynthesis; L-leucine biosynthesis; L-leucine from 3-methyl-2-oxobutanoate: step 1/4. Feedback inhibition by Leu. In terms of biological role, catalyzes the condensation of the acetyl group of acetyl-CoA with 3-methyl-2-oxobutanoate (2-oxoisovalerate) to form 3-carboxy-3-hydroxy-4-methylpentanoate (2-isopropylmalate). Involved in Leu biosynthesis, but does not participate in the chain elongation of glucosinolates. The polypeptide is 2-isopropylmalate synthase 2, chloroplastic (Arabidopsis thaliana (Mouse-ear cress)).